Consider the following 253-residue polypeptide: AA9 family lytic polysaccharide monooxygenase F (253 aa).

An N-terminal signal peptide occupies residues 1 to 16 (MKVLATLLASVGLVAA). Cu(2+) is bound at residue His17. Residue Asn22 is glycosylated (N-linked (GlcNAc...) asparagine). Intrachain disulfides connect Cys75–Cys193 and Cys163–Cys253. His105 serves as a coordination point for Cu(2+). The N-linked (GlcNAc...) asparagine glycan is linked to Asn143. Residues His179 and Gln188 each coordinate O2. Position 190 (Tyr190) interacts with Cu(2+).

This sequence belongs to the polysaccharide monooxygenase AA9 family. The cofactor is Cu(2+).

The protein localises to the secreted. It carries out the reaction [(1-&gt;4)-beta-D-glucosyl]n+m + reduced acceptor + O2 = 4-dehydro-beta-D-glucosyl-[(1-&gt;4)-beta-D-glucosyl]n-1 + [(1-&gt;4)-beta-D-glucosyl]m + acceptor + H2O.. Lytic polysaccharide monooxygenase (LPMO) that depolymerizes crystalline and amorphous polysaccharides via the oxidation of scissile alpha- or beta-(1-4)-glycosidic bonds, yielding C1 or C4 oxidation products. Catalysis by LPMOs requires the reduction of the active-site copper from Cu(II) to Cu(I) by a reducing agent and H(2)O(2) or O(2) as a cosubstrate. This is AA9 family lytic polysaccharide monooxygenase F from Podospora anserina (strain S / ATCC MYA-4624 / DSM 980 / FGSC 10383) (Pleurage anserina).